Here is a 287-residue protein sequence, read N- to C-terminus: Ret finger protein-like 4A (287 aa).

Residues 11-53 (CPVCLKDLEEAVQLKCGYACCLQCLNSLQKEPDGEGLLCRFCS) form an RING-type; degenerate zinc finger. Residues 78–276 (EPKLKSVLTM…LSICSVINPS (199 aa)) enclose the B30.2/SPRY domain.

As to quaternary structure, interacts with PSMB1, UBE2A and CCNB1.

It localises to the cytoplasm. It is found in the nucleus. This is Ret finger protein-like 4A (RFPL4A) from Homo sapiens (Human).